Here is a 249-residue protein sequence, read N- to C-terminus: Triosephosphate isomerase (249 aa).

Substrate-binding residues include Asn-12 and Lys-14. Position 14 is an N6-acetyllysine (Lys-14). The residue at position 68 (Tyr-68) is a 3'-nitrotyrosine. A Phosphoserine modification is found at Ser-80. His-96 (electrophile) is an active-site residue. Ser-106 carries the post-translational modification Phosphoserine. Lys-142 is covalently cross-linked (Glycyl lysine isopeptide (Lys-Gly) (interchain with G-Cter in SUMO1)). An N6-succinyllysine modification is found at Lys-149. Lys-156 carries the N6-acetyllysine; alternate modification. Lys-156 carries the post-translational modification N6-succinyllysine; alternate. At Ser-159 the chain carries Phosphoserine. Glu-166 acts as the Proton acceptor in catalysis. The residue at position 173 (Thr-173) is a Phosphothreonine. Lys-194 is subject to N6-acetyllysine; alternate. Lys-194 carries the N6-succinyllysine; alternate modification. At Lys-194 the chain carries N6-methyllysine; alternate. Ser-198 carries the phosphoserine modification. Tyr-209 bears the 3'-nitrotyrosine mark. Ser-212 is modified (phosphoserine). Phosphothreonine is present on Thr-214. Ser-223 carries the phosphoserine modification. Lys-238 carries the post-translational modification N6-acetyllysine.

It belongs to the triosephosphate isomerase family. In terms of assembly, homodimer.

It localises to the cytoplasm. The catalysed reaction is dihydroxyacetone phosphate = methylglyoxal + phosphate. It carries out the reaction D-glyceraldehyde 3-phosphate = dihydroxyacetone phosphate. It functions in the pathway carbohydrate degradation; glycolysis; D-glyceraldehyde 3-phosphate from glycerone phosphate: step 1/1. It participates in carbohydrate biosynthesis; gluconeogenesis. Its function is as follows. Triosephosphate isomerase is an extremely efficient metabolic enzyme that catalyzes the interconversion between dihydroxyacetone phosphate (DHAP) and D-glyceraldehyde-3-phosphate (G3P) in glycolysis and gluconeogenesis. In terms of biological role, it is also responsible for the non-negligible production of methylglyoxal a reactive cytotoxic side-product that modifies and can alter proteins, DNA and lipids. This is Triosephosphate isomerase (TPI1) from Canis lupus familiaris (Dog).